The sequence spans 1106 residues: Probable NAD-specific glutamate dehydrogenase (1106 aa).

Lysine 654 is an active-site residue.

This sequence belongs to the Glu/Leu/Phe/Val dehydrogenases family. Homotetramer.

The protein localises to the cytoplasm. It catalyses the reaction L-glutamate + NAD(+) + H2O = 2-oxoglutarate + NH4(+) + NADH + H(+). Functionally, NAD(+)-dependent glutamate dehydrogenase which degrades glutamate to ammonia and alpha-ketoglutarate. This is Probable NAD-specific glutamate dehydrogenase (gdh2) from Schizosaccharomyces pombe (strain 972 / ATCC 24843) (Fission yeast).